Here is a 292-residue protein sequence, read N- to C-terminus: NAD kinase (292 aa).

D74 acts as the Proton acceptor in catalysis. NAD(+)-binding positions include 74–75 (DG), 147–148 (NE), D177, and 188–193 (TGYSLS).

Belongs to the NAD kinase family. A divalent metal cation serves as cofactor.

The protein resides in the cytoplasm. It carries out the reaction NAD(+) + ATP = ADP + NADP(+) + H(+). In terms of biological role, involved in the regulation of the intracellular balance of NAD and NADP, and is a key enzyme in the biosynthesis of NADP. Catalyzes specifically the phosphorylation on 2'-hydroxyl of the adenosine moiety of NAD to yield NADP. This chain is NAD kinase, found in Cytophaga hutchinsonii (strain ATCC 33406 / DSM 1761 / CIP 103989 / NBRC 15051 / NCIMB 9469 / D465).